We begin with the raw amino-acid sequence, 245 residues long: Probable ABC transporter permease protein HI_0355 (245 aa).

The next 6 helical transmembrane spans lie at 9-29 (LLIV…GSFP), 61-81 (ICLG…LLSF), 92-112 (ILVI…VLWF), 115-135 (GMAS…TAAC), 170-190 (LPAF…GAVV), and 217-237 (FAAL…IDWL). Residues 50 to 234 (LWQHTQVTLL…SISLCLYFSI (185 aa)) enclose the ABC transmembrane type-1 domain.

Belongs to the binding-protein-dependent transport system permease family. CysTW subfamily.

It is found in the cell inner membrane. Functionally, probably part of a binding-protein-dependent transport system. Probably responsible for the translocation of the substrate across the membrane. The protein is Probable ABC transporter permease protein HI_0355 of Haemophilus influenzae (strain ATCC 51907 / DSM 11121 / KW20 / Rd).